Consider the following 258-residue polypeptide: Homeobox-leucine zipper protein ATHB-7 (258 aa).

The homeobox DNA-binding region spans 29-88 (NKNNQRRFSDEQIKSLEMMFESETRLEPRKKVQLARELGLQPRQVAIWFQNKRARWKSKQ). Residues 89–124 (LETEYNILRQNYDNLASQFESLKKEKQALVSELQRL) are leucine-zipper. Positions 149 to 183 (SSTHHESENEENRRRKPEEVRPEMEMKDDKGHHGV) are disordered. Residues 151 to 183 (THHESENEENRRRKPEEVRPEMEMKDDKGHHGV) show a composition bias toward basic and acidic residues.

It belongs to the HD-ZIP homeobox family. Class I subfamily. In terms of assembly, interacts with TBP2 and TFIIB1. Widely expressed.

It is found in the nucleus. Its function is as follows. Probable transcription activator that may act as growth regulators in response to water deficit. In Arabidopsis thaliana (Mouse-ear cress), this protein is Homeobox-leucine zipper protein ATHB-7 (ATHB-7).